The following is an 878-amino-acid chain: RNA-directed RNA polymerase (878 aa).

258–265 (GLPYVGRT) is a GTP binding site. The 201-residue stretch at 397 to 597 (LVYADNIYIV…DKERLFCSAA (201 aa)) folds into the RdRp catalytic domain. Residues 845-878 (GAGTSRPMGMEAPTRSKNAVKMAKRAQRQKESRQ) are disordered.

Interacts with VP3 in the cytoplasm. Post-translationally, may exist in multiple phosphorylated forms.

It is found in the virion. It carries out the reaction RNA(n) + a ribonucleoside 5'-triphosphate = RNA(n+1) + diphosphate. RNA-dependent RNA polymerase which is found both free and covalently attached to the genomic RNA. May also contain guanylyl and methyl transferase activities. The polypeptide is RNA-directed RNA polymerase (VP1) (Gallus gallus (Chicken)).